The primary structure comprises 251 residues: MRKPIIAGNWKMNKTIGEAVDFVEAVKANVPAQATVDSVVCAPALFLDRLLQAVKGTELKIGAQTMHFEDNGAFTGEISPKALSDMGVHYVIIGHSERREMFAETDETVNKKVHAAFAHHLVPIMCCGETAEEREAGKMEAVVKEQVENGLAGLSEEQVKQTVIAYEPIWAIGTGKSATEKDANEACAYVRQTVAANFSEEAAEAIRIQYGGSVKPGNIKDYMAQPDIDGALVGGASLDADSFLELVGAAK.

Position 9-11 (9-11 (NWK)) interacts with substrate. His-95 (electrophile) is an active-site residue. Glu-167 acts as the Proton acceptor in catalysis. Substrate is bound by residues Gly-173, Ser-213, and 234–235 (GG). Ser-213 carries the post-translational modification Phosphoserine.

The protein belongs to the triosephosphate isomerase family. In terms of assembly, homodimer.

The protein localises to the cytoplasm. The catalysed reaction is D-glyceraldehyde 3-phosphate = dihydroxyacetone phosphate. It functions in the pathway carbohydrate biosynthesis; gluconeogenesis. It participates in carbohydrate degradation; glycolysis; D-glyceraldehyde 3-phosphate from glycerone phosphate: step 1/1. Its function is as follows. Involved in the gluconeogenesis. Catalyzes stereospecifically the conversion of dihydroxyacetone phosphate (DHAP) to D-glyceraldehyde-3-phosphate (G3P). This chain is Triosephosphate isomerase, found in Shouchella clausii (strain KSM-K16) (Alkalihalobacillus clausii).